A 397-amino-acid chain; its full sequence is 1-deoxy-D-xylulose 5-phosphate reductoisomerase (397 aa).

Threonine 10, glycine 11, serine 12, isoleucine 13, glycine 36, asparagine 38, and asparagine 128 together coordinate NADPH. Lysine 129 contributes to the 1-deoxy-D-xylulose 5-phosphate binding site. Glutamate 130 contributes to the NADPH binding site. Aspartate 154 lines the Mn(2+) pocket. 1-deoxy-D-xylulose 5-phosphate-binding residues include serine 155, glutamate 156, serine 180, and histidine 203. Position 156 (glutamate 156) interacts with Mn(2+). Glycine 209 contributes to the NADPH binding site. 1-deoxy-D-xylulose 5-phosphate-binding residues include asparagine 221, lysine 222, and glutamate 225. Glutamate 225 lines the Mn(2+) pocket.

Belongs to the DXR family. Mg(2+) is required as a cofactor. Mn(2+) serves as cofactor.

The enzyme catalyses 2-C-methyl-D-erythritol 4-phosphate + NADP(+) = 1-deoxy-D-xylulose 5-phosphate + NADPH + H(+). It functions in the pathway isoprenoid biosynthesis; isopentenyl diphosphate biosynthesis via DXP pathway; isopentenyl diphosphate from 1-deoxy-D-xylulose 5-phosphate: step 1/6. In terms of biological role, catalyzes the NADPH-dependent rearrangement and reduction of 1-deoxy-D-xylulose-5-phosphate (DXP) to 2-C-methyl-D-erythritol 4-phosphate (MEP). This is 1-deoxy-D-xylulose 5-phosphate reductoisomerase from Solibacter usitatus (strain Ellin6076).